The sequence spans 203 residues: MSSNELTERVLVIASGNAGKIREFRQLLAHLPLSVQAQPKDLAVEETGQTFAENARIKALTVAQATGQWALADDSGLSVEALAGAPGVYSARYAASDALRIERLLQELKGIDDRRAHFSAALCIASETNEVLLEVEGRCEGLITHAARGEKGFGYDPIFEVDATGTTFAEMTIEQKRQWSHRGCAFALLDPALQELLHKQNKP.

15–20 (SGNAGK) provides a ligand contact to substrate. Residues glutamate 45 and aspartate 74 each coordinate Mg(2+). The active-site Proton acceptor is the aspartate 74. Substrate-binding positions include serine 75, 153-156 (FGYD), lysine 176, and 181-182 (HR).

The protein belongs to the HAM1 NTPase family. As to quaternary structure, homodimer. Requires Mg(2+) as cofactor.

The enzyme catalyses XTP + H2O = XMP + diphosphate + H(+). It carries out the reaction dITP + H2O = dIMP + diphosphate + H(+). The catalysed reaction is ITP + H2O = IMP + diphosphate + H(+). Pyrophosphatase that catalyzes the hydrolysis of nucleoside triphosphates to their monophosphate derivatives, with a high preference for the non-canonical purine nucleotides XTP (xanthosine triphosphate), dITP (deoxyinosine triphosphate) and ITP. Seems to function as a house-cleaning enzyme that removes non-canonical purine nucleotides from the nucleotide pool, thus preventing their incorporation into DNA/RNA and avoiding chromosomal lesions. The sequence is that of dITP/XTP pyrophosphatase from Prochlorococcus marinus (strain MIT 9313).